Consider the following 127-residue polypeptide: Aspartate 1-decarboxylase (127 aa).

The Schiff-base intermediate with substrate; via pyruvic acid role is filled by serine 25. Residue serine 25 is modified to Pyruvic acid (Ser). Threonine 57 serves as a coordination point for substrate. Tyrosine 58 acts as the Proton donor in catalysis. 73-75 (GAA) lines the substrate pocket.

This sequence belongs to the PanD family. In terms of assembly, heterooctamer of four alpha and four beta subunits. The cofactor is pyruvate. Post-translationally, is synthesized initially as an inactive proenzyme, which is activated by self-cleavage at a specific serine bond to produce a beta-subunit with a hydroxyl group at its C-terminus and an alpha-subunit with a pyruvoyl group at its N-terminus.

Its subcellular location is the cytoplasm. The catalysed reaction is L-aspartate + H(+) = beta-alanine + CO2. The protein operates within cofactor biosynthesis; (R)-pantothenate biosynthesis; beta-alanine from L-aspartate: step 1/1. Functionally, catalyzes the pyruvoyl-dependent decarboxylation of aspartate to produce beta-alanine. The chain is Aspartate 1-decarboxylase from Clostridium botulinum (strain Okra / Type B1).